The primary structure comprises 193 residues: Xanthine phosphoribosyltransferase (193 aa).

Xanthine is bound by residues Leu20 and Asn27. 129–133 lines the 5-phospho-alpha-D-ribose 1-diphosphate pocket; the sequence is ANGKA. A xanthine-binding site is contributed by Lys157.

The protein belongs to the purine/pyrimidine phosphoribosyltransferase family. Xpt subfamily. Homodimer.

The protein localises to the cytoplasm. It carries out the reaction XMP + diphosphate = xanthine + 5-phospho-alpha-D-ribose 1-diphosphate. It functions in the pathway purine metabolism; XMP biosynthesis via salvage pathway; XMP from xanthine: step 1/1. In terms of biological role, converts the preformed base xanthine, a product of nucleic acid breakdown, to xanthosine 5'-monophosphate (XMP), so it can be reused for RNA or DNA synthesis. This Bifidobacterium longum subsp. infantis (strain ATCC 15697 / DSM 20088 / JCM 1222 / NCTC 11817 / S12) protein is Xanthine phosphoribosyltransferase.